The sequence spans 160 residues: Large ribosomal subunit protein uL15 (160 aa).

Over residues 1–11 (MKLNELRDNHG) the composition is skewed to basic and acidic residues. The segment at 1-39 (MKLNELRDNHGARPKSKRLGRGIGSGKGKTSGKGVKGQK) is disordered. Residues 21 to 35 (RGIGSGKGKTSGKGV) show a composition bias toward gly residues.

Belongs to the universal ribosomal protein uL15 family. In terms of assembly, part of the 50S ribosomal subunit.

Its function is as follows. Binds to the 23S rRNA. The polypeptide is Large ribosomal subunit protein uL15 (Granulibacter bethesdensis (strain ATCC BAA-1260 / CGDNIH1)).